The following is a 134-amino-acid chain: Replication enhancer protein (134 aa).

Belongs to the geminiviridae replication enhancer protein family. In terms of assembly, homooligomer. Interacts with the replication-associated protein (REP). Interacts with host proliferating cell nuclear antigen (PCNA). Interacts with host retinoblastoma-related protein 1 (RBR1), and may thereby deregulate the host cell cycle. Oligomerization and interaction with PCNA are necessary for optimal replication enhancement.

In terms of biological role, increases viral DNA accumulation. Enhances infectivity and symptom expression. The protein is Replication enhancer protein of Tomato leaf curl virus (strain Australia) (ToLCV).